A 350-amino-acid chain; its full sequence is Variable large protein 4 (350 aa).

Residues 1–18 (MRRRISAIIMTLFMVLVS) form the signal peptide. Cysteine 19 carries N-palmitoyl cysteine lipidation. The S-diacylglycerol cysteine moiety is linked to residue cysteine 19.

It belongs to the variable large protein (Vlp) family. Delta subfamily.

Its subcellular location is the cell outer membrane. Its function is as follows. The Vlp and Vsp proteins are antigenically distinct proteins, only one vlp or vsp gene is transcriptionally active at any one time. Switching between these genes is a mechanism of host immune response evasion. In Borrelia hermsii, this protein is Variable large protein 4.